The following is a 482-amino-acid chain: tRNA sulfurtransferase (482 aa).

The THUMP domain maps to 61–165; it reads LAIRDALTRI…DDRLLLIKGR (105 aa). ATP is bound by residues 183–184, K265, G287, and Q296; that span reads LI. Cysteines 344 and 456 form a disulfide. A Rhodanese domain is found at 404–482; sequence FGANDVILDI…GFANVKVYRP (79 aa). C456 (cysteine persulfide intermediate) is an active-site residue.

Belongs to the ThiI family.

It is found in the cytoplasm. It carries out the reaction [ThiI sulfur-carrier protein]-S-sulfanyl-L-cysteine + a uridine in tRNA + 2 reduced [2Fe-2S]-[ferredoxin] + ATP + H(+) = [ThiI sulfur-carrier protein]-L-cysteine + a 4-thiouridine in tRNA + 2 oxidized [2Fe-2S]-[ferredoxin] + AMP + diphosphate. It catalyses the reaction [ThiS sulfur-carrier protein]-C-terminal Gly-Gly-AMP + S-sulfanyl-L-cysteinyl-[cysteine desulfurase] + AH2 = [ThiS sulfur-carrier protein]-C-terminal-Gly-aminoethanethioate + L-cysteinyl-[cysteine desulfurase] + A + AMP + 2 H(+). It functions in the pathway cofactor biosynthesis; thiamine diphosphate biosynthesis. Catalyzes the ATP-dependent transfer of a sulfur to tRNA to produce 4-thiouridine in position 8 of tRNAs, which functions as a near-UV photosensor. Also catalyzes the transfer of sulfur to the sulfur carrier protein ThiS, forming ThiS-thiocarboxylate. This is a step in the synthesis of thiazole, in the thiamine biosynthesis pathway. The sulfur is donated as persulfide by IscS. This is tRNA sulfurtransferase from Salmonella agona (strain SL483).